The chain runs to 309 residues: GTPase Era (309 aa).

Positions histidine 16–glutamate 186 constitute an Era-type G domain. The tract at residues glycine 24–serine 31 is G1. Glycine 24–serine 31 is a GTP binding site. The interval glutamine 50–arginine 54 is G2. The interval aspartate 71 to glycine 74 is G3. GTP is bound by residues aspartate 71–leucine 75 and asparagine 133–aspartate 136. Residues asparagine 133–aspartate 136 form a G4 region. Positions leucine 164–alanine 166 are G5. The region spanning leucine 217–proline 294 is the KH type-2 domain.

It belongs to the TRAFAC class TrmE-Era-EngA-EngB-Septin-like GTPase superfamily. Era GTPase family. In terms of assembly, monomer.

It is found in the cytoplasm. Its subcellular location is the cell membrane. An essential GTPase that binds both GDP and GTP, with rapid nucleotide exchange. Plays a role in 16S rRNA processing and 30S ribosomal subunit biogenesis and possibly also in cell cycle regulation and energy metabolism. This is GTPase Era from Deinococcus geothermalis (strain DSM 11300 / CIP 105573 / AG-3a).